The following is a 240-amino-acid chain: Uridylate kinase (240 aa).

12–15 (KLSG) serves as a coordination point for ATP. Residues 20-25 (GEKGFG) form an involved in allosteric activation by GTP region. UMP is bound at residue Gly-54. Positions 55 and 59 each coordinate ATP. UMP contacts are provided by residues Asp-74 and 135–142 (TGSPYFST). 3 residues coordinate ATP: Asn-163, Tyr-169, and Asp-172.

The protein belongs to the UMP kinase family. Homohexamer.

The protein localises to the cytoplasm. The catalysed reaction is UMP + ATP = UDP + ADP. It functions in the pathway pyrimidine metabolism; CTP biosynthesis via de novo pathway; UDP from UMP (UMPK route): step 1/1. With respect to regulation, allosterically activated by GTP. Inhibited by UTP. Catalyzes the reversible phosphorylation of UMP to UDP. The protein is Uridylate kinase of Limosilactobacillus reuteri (Lactobacillus reuteri).